Reading from the N-terminus, the 187-residue chain is Peptidyl-tRNA hydrolase (187 aa).

Y15 serves as a coordination point for tRNA. The active-site Proton acceptor is H20. Y64, N66, and N112 together coordinate tRNA.

Belongs to the PTH family. As to quaternary structure, monomer.

It is found in the cytoplasm. It carries out the reaction an N-acyl-L-alpha-aminoacyl-tRNA + H2O = an N-acyl-L-amino acid + a tRNA + H(+). Functionally, hydrolyzes ribosome-free peptidyl-tRNAs (with 1 or more amino acids incorporated), which drop off the ribosome during protein synthesis, or as a result of ribosome stalling. Its function is as follows. Catalyzes the release of premature peptidyl moieties from peptidyl-tRNA molecules trapped in stalled 50S ribosomal subunits, and thus maintains levels of free tRNAs and 50S ribosomes. This chain is Peptidyl-tRNA hydrolase, found in Phocaeicola vulgatus (strain ATCC 8482 / DSM 1447 / JCM 5826 / CCUG 4940 / NBRC 14291 / NCTC 11154) (Bacteroides vulgatus).